The primary structure comprises 211 residues: uncharacterized protein (211 aa).

2 disordered regions span residues 1-73 and 96-123; these read MLRR…SKLK and TNAA…ASLS. Polar residues-rich tracts occupy residues 26 to 35 and 53 to 62; these read SKSSLISLTS and APSQFLSPTN. Residues 63–73 are compositionally biased toward low complexity; the sequence is KRSTSSQSKLK. Ser182 bears the Phosphoserine mark. Thr184 is modified (phosphothreonine). Residue Ser186 is modified to Phosphoserine.

This is an uncharacterized protein from Saccharomyces cerevisiae (strain ATCC 204508 / S288c) (Baker's yeast).